The sequence spans 177 residues: Adenine phosphoribosyltransferase (177 aa).

The protein belongs to the purine/pyrimidine phosphoribosyltransferase family. As to quaternary structure, homodimer.

The protein resides in the cytoplasm. It carries out the reaction AMP + diphosphate = 5-phospho-alpha-D-ribose 1-diphosphate + adenine. It participates in purine metabolism; AMP biosynthesis via salvage pathway; AMP from adenine: step 1/1. Functionally, catalyzes a salvage reaction resulting in the formation of AMP, that is energically less costly than de novo synthesis. This is Adenine phosphoribosyltransferase from Chlorobium phaeovibrioides (strain DSM 265 / 1930) (Prosthecochloris vibrioformis (strain DSM 265)).